A 446-amino-acid polypeptide reads, in one-letter code: tRNA modification GTPase MnmE (446 aa).

The (6S)-5-formyl-5,6,7,8-tetrahydrofolate site is built by Arg-24, Glu-81, and Lys-120. The region spanning Gly-216–Leu-368 is the TrmE-type G domain. K(+) is bound at residue Asn-226. GTP is bound by residues Asn-226–Ser-231, Thr-245–Thr-251, and Asp-270–Gly-273. Ser-230 serves as a coordination point for Mg(2+). The K(+) site is built by Thr-245, Val-247, and Thr-250. Residue Thr-251 participates in Mg(2+) binding. Lys-446 provides a ligand contact to (6S)-5-formyl-5,6,7,8-tetrahydrofolate.

Belongs to the TRAFAC class TrmE-Era-EngA-EngB-Septin-like GTPase superfamily. TrmE GTPase family. As to quaternary structure, homodimer. Heterotetramer of two MnmE and two MnmG subunits. The cofactor is K(+).

It is found in the cytoplasm. In terms of biological role, exhibits a very high intrinsic GTPase hydrolysis rate. Involved in the addition of a carboxymethylaminomethyl (cmnm) group at the wobble position (U34) of certain tRNAs, forming tRNA-cmnm(5)s(2)U34. This is tRNA modification GTPase MnmE from Xanthomonas euvesicatoria pv. vesicatoria (strain 85-10) (Xanthomonas campestris pv. vesicatoria).